The following is a 623-amino-acid chain: Chaperone protein DnaK (623 aa).

A Phosphothreonine; by autocatalysis modification is found at T175. Residues 580-623 are disordered; sequence PEGAQGAGFDPNNMGGANAGNASAGNDKKDDNVVDADFKVEDDK. The span at 591-604 shows a compositional bias: low complexity; that stretch reads NNMGGANAGNASAG. Residues 605-623 are compositionally biased toward basic and acidic residues; that stretch reads NDKKDDNVVDADFKVEDDK.

Belongs to the heat shock protein 70 family.

In terms of biological role, acts as a chaperone. In Clostridium botulinum (strain Hall / ATCC 3502 / NCTC 13319 / Type A), this protein is Chaperone protein DnaK.